An 803-amino-acid polypeptide reads, in one-letter code: Ras GTPase-activating protein 4 (803 aa).

2 consecutive C2 domains span residues 1 to 105 (MAKR…SGWA) and 116 to 232 (VQGE…EGWF). The Ca(2+) site is built by D21, D27, D74, D76, S79, D82, D149, D155, D202, D204, S207, and D210. Positions 318-546 (GLAKDFLDLL…AQLKDFITKL (229 aa)) constitute a Ras-GAP domain. The PH domain occupies 566–673 (PPVKEGPLFI…WLSALRKVSI (108 aa)). Residues 675–711 (NTGLLGSYHPGVFRGDKWSCCHQKEKTGQGCDKTRSR) form a Btk-type zinc finger. The Zn(2+) site is built by H683, C694, C695, and C705. The disordered stretch occupies residues 781–803 (EAHSSSPAGSPPSEPNCLLELQT).

It depends on Ca(2+) as a cofactor. As to expression, widely expressed.

The protein resides in the cytoplasm. The protein localises to the cytosol. It localises to the cell membrane. Functionally, ca(2+)-dependent Ras GTPase-activating protein, that switches off the Ras-MAPK pathway following a stimulus that elevates intracellular calcium. Functions as an adaptor for Cdc42 and Rac1 during FcR-mediated phagocytosis. This Homo sapiens (Human) protein is Ras GTPase-activating protein 4 (RASA4).